Consider the following 323-residue polypeptide: Elongation factor P--(R)-beta-lysine ligase (323 aa).

76–78 is a binding site for substrate; sequence SPE. Residues 100-102 and Asn109 contribute to the ATP site; that span reads RNE. A substrate-binding site is contributed by Tyr118. Residue 242–243 coordinates ATP; the sequence is EL. Glu249 is a substrate binding site. Gly298 is an ATP binding site.

This sequence belongs to the class-II aminoacyl-tRNA synthetase family. EpmA subfamily. As to quaternary structure, homodimer.

The enzyme catalyses D-beta-lysine + L-lysyl-[protein] + ATP = N(6)-((3R)-3,6-diaminohexanoyl)-L-lysyl-[protein] + AMP + diphosphate + H(+). Functionally, with EpmB is involved in the beta-lysylation step of the post-translational modification of translation elongation factor P (EF-P). Catalyzes the ATP-dependent activation of (R)-beta-lysine produced by EpmB, forming a lysyl-adenylate, from which the beta-lysyl moiety is then transferred to the epsilon-amino group of a conserved specific lysine residue in EF-P. The chain is Elongation factor P--(R)-beta-lysine ligase from Haemophilus influenzae (strain ATCC 51907 / DSM 11121 / KW20 / Rd).